A 709-amino-acid chain; its full sequence is Dibasic-processing endoprotease (709 aa).

A signal peptide spans Met1–Cys22. 2 propeptides span residues Ser23–Arg82 and Gly83–Arg102. At Asp103–Glu668 the chain is on the lumenal side. The 313-residue stretch at Gln128–Val440 folds into the Peptidase S8 domain. An N-linked (GlcNAc...) asparagine glycan is attached at Asn155. Residues Asp162 and His200 each act as charge relay system in the active site. 2 cysteine pairs are disulfide-bonded: Cys216-Cys363 and Cys308-Cys338. The Charge relay system role is filled by Ser371. The 140-residue stretch at Val449–Asn588 folds into the P/Homo B domain. N-linked (GlcNAc...) asparagine glycosylation is found at Asn463, Asn471, and Asn620. The helical transmembrane segment at Ile669 to Ala693 threads the bilayer. The Cytoplasmic segment spans residues Phe694–Ala709.

It belongs to the peptidase S8 family. Furin subfamily. Ca(2+) serves as cofactor. In terms of processing, N-glycosylated.

It is found in the golgi apparatus. Its subcellular location is the trans-Golgi network membrane. Functionally, membrane-bound, subtilisin-like serine protease that processes the P-factor precursor and other precursor proteins. Essential for cell viability. Cleaves substrate on the C-terminal side of dibasic residues. In Schizosaccharomyces pombe (strain 972 / ATCC 24843) (Fission yeast), this protein is Dibasic-processing endoprotease (krp1).